The primary structure comprises 221 residues: 7-cyano-7-deazaguanine synthase (221 aa).

12–22 (FSGGQDSTTCL) serves as a coordination point for ATP. Residues C190, C199, C202, and C205 each coordinate Zn(2+).

Belongs to the QueC family. Homodimer. Zn(2+) serves as cofactor.

The catalysed reaction is 7-carboxy-7-deazaguanine + NH4(+) + ATP = 7-cyano-7-deazaguanine + ADP + phosphate + H2O + H(+). The protein operates within purine metabolism; 7-cyano-7-deazaguanine biosynthesis. Catalyzes the ATP-dependent conversion of 7-carboxy-7-deazaguanine (CDG) to 7-cyano-7-deazaguanine (preQ(0)). This is 7-cyano-7-deazaguanine synthase from Clostridium novyi (strain NT).